Reading from the N-terminus, the 127-residue chain is Small ribosomal subunit protein uS11 (127 aa).

This sequence belongs to the universal ribosomal protein uS11 family. Part of the 30S ribosomal subunit. Interacts with proteins S7 and S18. Binds to IF-3.

In terms of biological role, located on the platform of the 30S subunit, it bridges several disparate RNA helices of the 16S rRNA. Forms part of the Shine-Dalgarno cleft in the 70S ribosome. The chain is Small ribosomal subunit protein uS11 from Pelodictyon phaeoclathratiforme (strain DSM 5477 / BU-1).